Here is a 179-residue protein sequence, read N- to C-terminus: MRPSVWAAVAAGLWVLCTVIAAAPRRCLLSHYRSLEPRTLAAAKALRDRYEEEALSWGQRNCSFRPRRDPPRPSSCARLRHVARGIADAQAVLSGLHRSELLPGAGPILELLAAAGRDVAACLELARPGSSRKVPGAQKRRHKPRRADSPRCRKASVVFNLLRLLTWELRLAAHSGPCL.

Positions 1–21 (MRPSVWAAVAAGLWVLCTVIA) are cleaved as a signal peptide. The segment at 130–149 (SSRKVPGAQKRRHKPRRADS) is disordered.

The protein belongs to the lambda interferon family.

It localises to the cytoplasm. The protein localises to the secreted. In terms of biological role, cytokine that may trigger an antiviral response activating the JAK-STAT pathway and up-regulating specifically some interferon-stimulated genes. This Homo sapiens (Human) protein is Interferon lambda-4 (IFNL4).